A 141-amino-acid chain; its full sequence is Proteasome maturation protein (141 aa).

Lysine 39 is covalently cross-linked (Glycyl lysine isopeptide (Lys-Gly) (interchain with G-Cter in SUMO2)). The short motif at 68–72 is the High-affinity association with the preproteasome element; it reads RNIQG.

It belongs to the POMP/UMP1 family. Constituent of preproteasomes, but not of mature 20S proteasomes. Within the preproteasome, may directly interact with PSMB1/beta6, PSMB4/beta7, PSMB5/beta5, PSMB6/beta1 and PSMB9/beta1i. Interaction with PSMB8/beta5i has been observed in PubMed:10973495, but not in PubMed:10926487. Forms tetramers. Strongly expressed from the basal layer to the granular layer of healthy epidermis, whereas in KLICK patients there is a gradual decrease of expression toward the granular layer.

The protein resides in the cytoplasm. It is found in the cytosol. It localises to the nucleus. The protein localises to the microsome membrane. Functionally, molecular chaperone essential for the assembly of standard proteasomes and immunoproteasomes. Degraded after completion of proteasome maturation. Mediates the association of 20S preproteasome with the endoplasmic reticulum. The sequence is that of Proteasome maturation protein from Homo sapiens (Human).